Here is a 235-residue protein sequence, read N- to C-terminus: Large ribosomal subunit protein uL1 (235 aa).

Positions 1 to 22 are disordered; the sequence is MSKNSKAYRAAAEKVDRSNPYT.

The protein belongs to the universal ribosomal protein uL1 family. In terms of assembly, part of the 50S ribosomal subunit.

Its function is as follows. Binds directly to 23S rRNA. The L1 stalk is quite mobile in the ribosome, and is involved in E site tRNA release. In terms of biological role, protein L1 is also a translational repressor protein, it controls the translation of the L11 operon by binding to its mRNA. The sequence is that of Large ribosomal subunit protein uL1 from Mycobacterium ulcerans (strain Agy99).